The following is a 247-amino-acid chain: Probable transcriptional regulatory protein PC1_1817 (247 aa).

The protein belongs to the TACO1 family.

The protein localises to the cytoplasm. The sequence is that of Probable transcriptional regulatory protein PC1_1817 from Pectobacterium carotovorum subsp. carotovorum (strain PC1).